Consider the following 274-residue polypeptide: 2-amino-4,5-dihydroxy-6-oxo-7-(phosphonooxy)heptanoate synthase (274 aa).

The protein belongs to the DeoC/FbaB aldolase family. GriI subfamily. In terms of assembly, homodecamer.

The enzyme catalyses 2-amino-4,5-dihydroxy-6-oxo-7-(phosphooxy)heptanoate = L-aspartate 4-semialdehyde + dihydroxyacetone phosphate. Its function is as follows. catalyzes aldol condensation between L-aspartate-4-semialdehyde (ASA) and dihydroxyacetone phosphate (DHAP), to form 2-amino-4,5-dihydroxy-6-oxo-7-(phosphonooxy)heptanoate. The chain is 2-amino-4,5-dihydroxy-6-oxo-7-(phosphonooxy)heptanoate synthase (griI) from Streptomyces griseus subsp. griseus (strain JCM 4626 / CBS 651.72 / NBRC 13350 / KCC S-0626 / ISP 5235).